Here is a 450-residue protein sequence, read N- to C-terminus: Glucose-6-phosphate isomerase (450 aa).

The residue at position 38 (T38) is a Phosphothreonine. E290 (proton donor) is an active-site residue. Active-site residues include H311 and K425.

Belongs to the GPI family.

It is found in the cytoplasm. The catalysed reaction is alpha-D-glucose 6-phosphate = beta-D-fructose 6-phosphate. The protein operates within carbohydrate biosynthesis; gluconeogenesis. Its pathway is carbohydrate degradation; glycolysis; D-glyceraldehyde 3-phosphate and glycerone phosphate from D-glucose: step 2/4. Catalyzes the reversible isomerization of glucose-6-phosphate to fructose-6-phosphate. The chain is Glucose-6-phosphate isomerase from Bacillus subtilis (strain 168).